A 165-amino-acid polypeptide reads, in one-letter code: Phosphopantetheine adenylyltransferase (165 aa).

Position 10 (Ser-10) interacts with substrate. ATP is bound by residues 10–11 (SF) and His-18. Substrate is bound by residues Lys-42, Ser-79, and Arg-93. Residues 94 to 96 (GLR), Glu-104, and 129 to 135 (VRPITAT) contribute to the ATP site.

This sequence belongs to the bacterial CoaD family. Homohexamer. Mg(2+) serves as cofactor.

The protein localises to the cytoplasm. It carries out the reaction (R)-4'-phosphopantetheine + ATP + H(+) = 3'-dephospho-CoA + diphosphate. It participates in cofactor biosynthesis; coenzyme A biosynthesis; CoA from (R)-pantothenate: step 4/5. Its function is as follows. Reversibly transfers an adenylyl group from ATP to 4'-phosphopantetheine, yielding dephospho-CoA (dPCoA) and pyrophosphate. The sequence is that of Phosphopantetheine adenylyltransferase from Bradyrhizobium diazoefficiens (strain JCM 10833 / BCRC 13528 / IAM 13628 / NBRC 14792 / USDA 110).